Reading from the N-terminus, the 432-residue chain is Muscle cell intermediate filament protein OV71 (432 aa).

A coil 1B region spans residues 1-111 (KLIDELEEYK…RVHDQEISEL (111 aa)). Residues 1-277 (KLIDELEEYK…KMLEGEENRA (277 aa)) form the IF rod domain. A linker 12 region spans residues 112-128 (QAMAARDTTSENREYFK). A coil 2 region spans residues 129 to 277 (NELSSAIRDI…KMLEGEENRA (149 aa)). Positions 278–432 (GLRQLVEQVV…HIQRSSHTIS (155 aa)) are tail. In terms of domain architecture, LTD spans 310–427 (SRTSFQRSAK…EERASHIQRS (118 aa)).

This sequence belongs to the intermediate filament family.

This is Muscle cell intermediate filament protein OV71 (OV71) from Onchocerca volvulus.